A 188-amino-acid chain; its full sequence is Crossover junction endodeoxyribonuclease RuvC (188 aa).

Catalysis depends on residues D7, E68, and D141. Mg(2+) is bound by residues D7, E68, and D141.

Belongs to the RuvC family. In terms of assembly, homodimer which binds Holliday junction (HJ) DNA. The HJ becomes 2-fold symmetrical on binding to RuvC with unstacked arms; it has a different conformation from HJ DNA in complex with RuvA. In the full resolvosome a probable DNA-RuvA(4)-RuvB(12)-RuvC(2) complex forms which resolves the HJ. It depends on Mg(2+) as a cofactor.

It localises to the cytoplasm. The enzyme catalyses Endonucleolytic cleavage at a junction such as a reciprocal single-stranded crossover between two homologous DNA duplexes (Holliday junction).. Its function is as follows. The RuvA-RuvB-RuvC complex processes Holliday junction (HJ) DNA during genetic recombination and DNA repair. Endonuclease that resolves HJ intermediates. Cleaves cruciform DNA by making single-stranded nicks across the HJ at symmetrical positions within the homologous arms, yielding a 5'-phosphate and a 3'-hydroxyl group; requires a central core of homology in the junction. The consensus cleavage sequence is 5'-(A/T)TT(C/G)-3'. Cleavage occurs on the 3'-side of the TT dinucleotide at the point of strand exchange. HJ branch migration catalyzed by RuvA-RuvB allows RuvC to scan DNA until it finds its consensus sequence, where it cleaves and resolves the cruciform DNA. The sequence is that of Crossover junction endodeoxyribonuclease RuvC from Mycobacterium leprae (strain TN).